Here is an 877-residue protein sequence, read N- to C-terminus: MHNLENKNASNKKPKKIVVSDLIAILTYLMEIKNKMTNKELWKIRHICLTGSYNNNQMSIMKILMNKFPKTINVPFDKQNNTYLHQSIFNRHKIFVDFFMNELNDNINYRSKNKIGISHLHALVNYGYIDHIETAIIKDPGAIQQLSDDGQNILEFAVIPCFSIISNKNSEPYKKSNTTIINIIKTLSKSITKLDLQSRNKMGYRAIECAVRYCSTDVIDELISLGFSINESRLKNRIFPTINNNDLIGFATQIDRLDMVKHLINIGAPIHMYHINKHNKLLVPTCLVVAIKFKRDQCIHYLLNLPESIQALSNNTIKKYLFNIATNAGCTNHEIISKLCPKTYDDKKLRKNCNRYKISVFEQHENKIERNIKNYYKRRFMILDSISNMLSILCSIYNFSDNDSDLHKITRTVVSLEANLLLKYTTINNVYETVADFVDHIELTDIQYCFETVSNSEIMKASDCIINEYFISMKKLGIFKKINRLIKSKNIINTLLNEFDSDSESTDDDSDTKRACSCGCQSCYDSDEDPVCDSNESDNSNDINNHVKSDNKLNSSNDYYDEDDSEDNYNNQSDDEPLVKNDVVNTINTITPNQNLENTFNENNVMINNINFEKTLNNKHQSFQDNICENISENISEKIPNNNRDNNCNNNHNNNIQGDKELFDKPLHLQYTRLTKLHEHYIHKSLYKLRHPIKLNQYDTVYNLLTSLDPYVKNNNNILVFNSDNKLIAKIFSLSIKSDTDYINDINSENDNVNMYHEKTKLQIRSKPSRWIRFYSQNICGLDKQDPNHMFPFVLDRILNDWPCIERRIRDKIHPDGLDSLLYFYGELLINGEMIRGCFEYFINSNNSVFHRLFREEYKLPQNIRDTLDESINVLSY.

ANK repeat units follow at residues 44-74 (IRHI…TINV), 79-109 (QNNT…NINY), 115-145 (IGIS…AIQQ), 202-231 (MGYR…SINE), 243-272 (NNND…PIHM), and 282-311 (LVPT…SIQA). Residues 525–579 (DSDEDPVCDSNESDNSNDINNHVKSDNKLNSSNDYYDEDDSEDNYNNQSDDEPLV) are disordered. A compositionally biased stretch (low complexity) spans 533–544 (DSNESDNSNDIN).

This chain is Putative ankyrin repeat protein R748, found in Acanthamoeba polyphaga mimivirus (APMV).